We begin with the raw amino-acid sequence, 307 residues long: MNFQQQGYRATKPRARASPPTGGPMLFDDTSSGPPPMNNQNYYSSGYNMAEMPAGGQEPGVGNIFADPMANAAMMYGSTLANQGKDIVNKEINRFMSVNKLKYFFAVDTKYVMKKLLLLMFPYTHQDWEVRYHRDTPLTPRHDVNAPDLYIPTMAFITYILLAGMALGIQKRFSPEVLGLCASTALVWMIIEVLVMLLSLYLLTVHTDLSTFDLVAYSGYKYVGMILTVFCGLLFGSDGYYVALAWSSCALMFFIVRSLKMKILSSISADSMGAGASAKPRFRLYITVASAAFQPFIIYWLTAHLVR.

The segment at 1-42 is disordered; sequence MNFQQQGYRATKPRARASPPTGGPMLFDDTSSGPPPMNNQNY. Residues 1–148 lie on the Cytoplasmic side of the membrane; sequence MNFQQQGYRA…TPRHDVNAPD (148 aa). Residues 149 to 169 form a helical membrane-spanning segment; sequence LYIPTMAFITYILLAGMALGI. Over 170–184 the chain is Lumenal; it reads QKRFSPEVLGLCAST. A helical membrane pass occupies residues 185–205; the sequence is ALVWMIIEVLVMLLSLYLLTV. The Cytoplasmic portion of the chain corresponds to 206–213; that stretch reads HTDLSTFD. The chain crosses the membrane as a helical span at residues 214-236; that stretch reads LVAYSGYKYVGMILTVFCGLLFG. The Lumenal segment spans residues 237 to 239; that stretch reads SDG. The helical transmembrane segment at 240-259 threads the bilayer; it reads YYVALAWSSCALMFFIVRSL. The Cytoplasmic segment spans residues 260-285; the sequence is KMKILSSISADSMGAGASAKPRFRLY. A helical transmembrane segment spans residues 286 to 306; sequence ITVASAAFQPFIIYWLTAHLV.

It belongs to the YIF1 family.

It localises to the endoplasmic reticulum membrane. Its subcellular location is the golgi apparatus membrane. The protein resides in the endoplasmic reticulum-Golgi intermediate compartment membrane. In terms of biological role, possible role in transport between endoplasmic reticulum and Golgi. In Danio rerio (Zebrafish), this protein is Protein YIF1A (yif1a).